We begin with the raw amino-acid sequence, 235 residues long: Large ribosomal subunit protein uL1 (235 aa).

This sequence belongs to the universal ribosomal protein uL1 family. As to quaternary structure, part of the 50S ribosomal subunit.

Functionally, binds directly to 23S rRNA. The L1 stalk is quite mobile in the ribosome, and is involved in E site tRNA release. Protein L1 is also a translational repressor protein, it controls the translation of the L11 operon by binding to its mRNA. This chain is Large ribosomal subunit protein uL1, found in Citrobacter koseri (strain ATCC BAA-895 / CDC 4225-83 / SGSC4696).